Here is a 555-residue protein sequence, read N- to C-terminus: MASAKDAQPAPEKSLSSDPQPEPSKKGARFWLIFVAISLTTFLAALDTSIISTALPTITADLGSESLYVWIIDAYLLASTATIPIFAQAANIYGRRSLTLIAVCIFTLGSGLCGGAHNTAMMVGGRAVQGIGGGGILTMSEIVVCDMVSIRERGMYAGIIGGVWAIAAVVAPVMGGAFAQNISWRWIFYINLPIAGVSLVALGLFLKLSRPPSGTFKEQMSRIDWGGSVLLIGSVTSIVLALSWGGSEHPWSGWQTIVPLVIGLLALVAFFAYQGAPWLREPTMPLRLFSNRTSSTLLVISFIHSLLLYWICYFLPVYFQAVKEASPTRSAVMLFPIACTSAPAGVAAGITITKTGKYRVWHFTGFVLMSIACGLFTLLDAQSSTGRWVGFQILFGVGTGTVFTSTLPPILASLPDSDVATATGAWTFIRNFGSIWGVAIPAAVFNNHVNHAAPKISDSSVKSLLVDGGAYEHATQHFIKSLSPNPDLKTQVIQVYLEGLKVVWQVSLAFCLLGFILCFFVRSLTLRDELNTEFGLKEEKPNSNNMSSEEGVVRD.

The interval 1-23 is disordered; the sequence is MASAKDAQPAPEKSLSSDPQPEP. 5 consecutive transmembrane segments (helical) span residues 31–51, 67–87, 97–117, 130–150, and 159–179; these read WLIFVAISLTTFLAALDTSII, LYVWIIDAYLLASTATIPIFA, SLTLIAVCIFTLGSGLCGGAH, GIGGGGILTMSEIVVCDMVSI, and IIGGVWAIAAVVAPVMGGAFA. Asn181 carries an N-linked (GlcNAc...) asparagine glycan. Helical transmembrane passes span 186–206, 225–245, and 253–273; these read WIFYINLPIAGVSLVALGLFL, WGGSVLLIGSVTSIVLALSWG, and GWQTIVPLVIGLLALVAFFAY. Asn291 is a glycosylation site (N-linked (GlcNAc...) asparagine). 6 helical membrane passes run 297–317, 332–352, 360–380, 393–413, 425–445, and 501–521; these read LLVISFIHSLLLYWICYFLPV, VMLFPIACTSAPAGVAAGITI, VWHFTGFVLMSIACGLFTLLD, ILFGVGTGTVFTSTLPPILAS, AWTFIRNFGSIWGVAIPAAVF, and KVVWQVSLAFCLLGFILCFFV. Asn545 carries N-linked (GlcNAc...) asparagine glycosylation.

This sequence belongs to the major facilitator superfamily. TCR/Tet family.

The protein resides in the membrane. Efflux pump; part of the gene cluster that mediates the biosynthesis of the mycotoxin fusarin C. Within the cluster, FUS1, FUS2, FUS8 and FUS9 are sufficient for fusarin production. The other FUS cluster members are not essential for fusarin C biosynthesis. This Gibberella fujikuroi (strain CBS 195.34 / IMI 58289 / NRRL A-6831) (Bakanae and foot rot disease fungus) protein is Efflux pump FUS6.